The chain runs to 23 residues: Putative gene 50 protein (23 aa).

The protein is Putative gene 50 protein (50) of Bacillus subtilis (Bacteriophage SP01).